A 96-amino-acid chain; its full sequence is HssA/B-like protein 25 (96 aa).

It belongs to the hssA/B family.

The chain is HssA/B-like protein 25 (hssl25) from Dictyostelium discoideum (Social amoeba).